Here is a 692-residue protein sequence, read N- to C-terminus: Proprotein convertase subtilisin/kexin type 9 (692 aa).

The N-terminal stretch at 1 to 30 (MGTVSSRRSWWPLPLLLLLLLLLGPAGARA) is a signal peptide. The propeptide occupies 31 to 152 (QEDEDGDYEE…IEEDSSVFAQ (122 aa)). Tyr-38 bears the Sulfotyrosine mark. A Phosphoserine modification is found at Ser-47. The Inhibitor I9 domain maps to 77–149 (TYVVVLKEET…VDYIEEDSSV (73 aa)). Positions 155-461 (PWNLERITPP…GWQLFCRTVW (307 aa)) constitute a Peptidase S8 domain. Catalysis depends on charge relay system residues Asp-186 and His-226. Intrachain disulfides connect Cys-223–Cys-255 and Cys-323–Cys-358. Ser-386 functions as the Charge relay system in the catalytic mechanism. The segment at 450–692 (GAGWQLFCRT…HLAQASQELQ (243 aa)) is C-terminal domain. 3 cysteine pairs are disulfide-bonded: Cys-457–Cys-527, Cys-477–Cys-526, and Cys-486–Cys-509. N-linked (GlcNAc...) asparagine glycosylation occurs at Asn-533. 6 disulfide bridges follow: Cys-534–Cys-601, Cys-552–Cys-600, Cys-562–Cys-588, Cys-608–Cys-679, Cys-626–Cys-678, and Cys-635–Cys-654. Ser-688 carries the phosphoserine modification.

This sequence belongs to the peptidase S8 family. In terms of assembly, monomer. Can self-associate to form dimers and higher multimers which may have increased LDLR degrading activity. The precursor protein but not the mature protein may form multimers. Interacts with APOB, VLDLR, LRP8/APOER2 and BACE1. The full-length immature form (pro-PCSK9) interacts with SCNN1A, SCNN1B and SCNN1G. The pro-PCSK9 form (via C-terminal domain) interacts with LDLR. Interacts (via the C-terminal domain) with ANXA2 (via repeat Annexin 1); the interaction inhibits the degradation of LDLR. Ca(2+) serves as cofactor. Cleavage by furin and PCSK5 generates a truncated inactive protein that is unable to induce LDLR degradation. In terms of processing, undergoes autocatalytic cleavage in the endoplasmic reticulum to release the propeptide from the N-terminus and the cleavage of the propeptide is strictly required for its maturation and activation. The cleaved propeptide however remains associated with the catalytic domain through non-covalent interactions, preventing potential substrates from accessing its active site. As a result, it is secreted from cells as a propeptide-containing, enzymatically inactive protein. Post-translationally, phosphorylation protects the propeptide against proteolysis.

Its subcellular location is the cytoplasm. The protein resides in the secreted. It is found in the endosome. The protein localises to the lysosome. It localises to the cell surface. Its subcellular location is the endoplasmic reticulum. The protein resides in the golgi apparatus. Its proteolytic activity is autoinhibited by the non-covalent binding of the propeptide to the catalytic domain. Inhibited by EGTA. Crucial player in the regulation of plasma cholesterol homeostasis. Binds to low-density lipid receptor family members: low density lipoprotein receptor (LDLR), very low density lipoprotein receptor (VLDLR), apolipoprotein E receptor (LRP1/APOER) and apolipoprotein receptor 2 (LRP8/APOER2), and promotes their degradation in intracellular acidic compartments. Acts via a non-proteolytic mechanism to enhance the degradation of the hepatic LDLR through a clathrin LDLRAP1/ARH-mediated pathway. May prevent the recycling of LDLR from endosomes to the cell surface or direct it to lysosomes for degradation. Can induce ubiquitination of LDLR leading to its subsequent degradation. Inhibits intracellular degradation of APOB via the autophagosome/lysosome pathway in a LDLR-independent manner. Involved in the disposal of non-acetylated intermediates of BACE1 in the early secretory pathway. Inhibits epithelial Na(+) channel (ENaC)-mediated Na(+) absorption by reducing ENaC surface expression primarily by increasing its proteasomal degradation. Regulates neuronal apoptosis via modulation of LRP8/APOER2 levels and related anti-apoptotic signaling pathways. In Pan paniscus (Pygmy chimpanzee), this protein is Proprotein convertase subtilisin/kexin type 9 (PCSK9).